We begin with the raw amino-acid sequence, 878 residues long: Splicing factor 3B subunit 2 (878 aa).

Basic and acidic residues predominate over residues 1 to 10 (MAAEHPEPPK). Disordered stretches follow at residues 1 to 25 (MAAE…GHYG) and 67 to 136 (RPVL…LRVG). Lys-10 is covalently cross-linked (Glycyl lysine isopeptide (Lys-Gly) (interchain with G-Cter in SUMO2)). Positions 24–58 (YGAWAAQELQARLAEIGAPIQGSREELVERLQTYT) constitute an SAP domain. 2 stretches are compositionally biased toward pro residues: residues 91–114 (PMPP…PPPG) and 122–133 (AHPPNLGPPPPL). A coiled-coil region spans residues 140–177 (ALSEEERLKLAQQQAALLMQQEERAKQAAVLMEQERQQ). Disordered stretches follow at residues 183–356 (GTAV…EYVT) and 383–436 (KKEK…SKKK). A compositionally biased stretch (low complexity) spans 201-221 (PLGPRVAAPVGPVVPTPTVLP). An omega-N-methylarginine mark is found at Arg-205, Arg-228, and Arg-230. Pro residues predominate over residues 224–237 (APVPRPRGPPPPPG). An N6-acetyllysine modification is found at Lys-258. Over residues 260 to 269 (LQLKESRQEE) the composition is skewed to basic and acidic residues. Residue Lys-263 forms a Glycyl lysine isopeptide (Lys-Gly) (interchain with G-Cter in SUMO2) linkage. The residue at position 272 (Ser-272) is a Phosphoserine. Residue Thr-281 is modified to Phosphothreonine. A phosphoserine mark is found at Ser-290 and Ser-292. Thr-294 carries the phosphothreonine modification. Ser-300 carries the phosphoserine modification. The span at 305–321 (EKNRKRRNRKKKKKPQR) shows a compositional bias: basic residues. Residues 330–342 (SGDREKDSGRSRG) show a composition bias toward basic and acidic residues. Position 343 is a phosphoserine (Ser-343). Residues Lys-383 and Lys-395 each participate in a glycyl lysine isopeptide (Lys-Gly) (interchain with G-Cter in SUMO2) cross-link. 2 stretches are compositionally biased toward basic and acidic residues: residues 383-397 (KKEK…DKME) and 405-414 (KGFEEEHKDS). Residues 384–533 (KEKEKEPEKL…QEKEEQKTMK (150 aa)) form a required for interaction with PRMT9 region. Residues Ser-414, Ser-418, and Ser-419 each carry the phosphoserine modification. A Glycyl lysine isopeptide (Lys-Gly) (interchain with G-Cter in SUMO2) cross-link involves residue Lys-475. Omega-N-methylarginine is present on residues Arg-491 and Arg-498. Arg-491 is modified (symmetric dimethylarginine). Lys-526 participates in a covalent cross-link: Glycyl lysine isopeptide (Lys-Gly) (interchain with G-Cter in SUMO2). Residues 674 to 740 (AAEFQTKTEE…PGGFSSVPAG (67 aa)) are disordered. The span at 695–715 (EPSDEESSEEEEEEESDEDKP) shows a compositional bias: acidic residues. Residue Lys-753 forms a Glycyl lysine isopeptide (Lys-Gly) (interchain with G-Cter in SUMO2) linkage. Thr-763 is modified (phosphothreonine). Residues Lys-773, Lys-826, and Lys-840 each participate in a glycyl lysine isopeptide (Lys-Gly) (interchain with G-Cter in SUMO2) cross-link. The span at 827-852 (YEEHVREQQAQVEKEDFSDMVAEHAA) shows a compositional bias: basic and acidic residues. The interval 827-878 (YEEHVREQQAQVEKEDFSDMVAEHAAKQKQKKRKAQPQDSRGGSKKYKEFKF) is disordered. Ser-844 bears the Phosphoserine mark.

In terms of assembly, component of the 17S U2 SnRNP complex, a ribonucleoprotein complex that contains small nuclear RNA (snRNA) U2 and a number of specific proteins. Part of the SF3B subcomplex of the 17S U2 SnRNP complex. SF3B associates with the splicing subcomplex SF3A and a 12S RNA unit to form the U2 small nuclear ribonucleoproteins complex (U2 snRNP). Within the SF3B complex, interacts directly with SF3B4. Found in a complex with PRMT9, SF3B2 and SF3B4. Interacts (Arg-491-methylated form) with SMN1 (via Tudor domain). Interacts with RBM7. Interacts with ERCC6. Component of the minor spliceosome. Within this complex, interacts with SCNM1 and CRIPT. In terms of processing, methylation at Arg-491 by PRMT9 is required for the interaction with SMN1.

The protein localises to the nucleus. It localises to the nucleus speckle. Its function is as follows. Component of the 17S U2 SnRNP complex of the spliceosome, a large ribonucleoprotein complex that removes introns from transcribed pre-mRNAs. The 17S U2 SnRNP complex (1) directly participates in early spliceosome assembly and (2) mediates recognition of the intron branch site during pre-mRNA splicing by promoting the selection of the pre-mRNA branch-site adenosine, the nucleophile for the first step of splicing. Within the 17S U2 SnRNP complex, SF3B2 is part of the SF3B subcomplex, which is required for 'A' complex assembly formed by the stable binding of U2 snRNP to the branchpoint sequence in pre-mRNA. Sequence independent binding of SF3A and SF3B subcomplexes upstream of the branch site is essential, it may anchor U2 snRNP to the pre-mRNA. May also be involved in the assembly of the 'E' complex. Also acts as a component of the minor spliceosome, which is involved in the splicing of U12-type introns in pre-mRNAs. In Mus musculus (Mouse), this protein is Splicing factor 3B subunit 2.